Consider the following 250-residue polypeptide: Transcriptional activator protein EchR (250 aa).

The 66-residue stretch at 173-238 (KSQEPNIFSQ…HAIRLGVEMN (66 aa)) folds into the HTH luxR-type domain. A DNA-binding region (H-T-H motif) is located at residues 197–216 (YQEIALILGITTSTVKFHIG).

It belongs to the autoinducer-regulated transcriptional regulatory protein family.

Functions as a potential ohlL-responsive transcriptional regulator. The sequence is that of Transcriptional activator protein EchR (echR) from Dickeya chrysanthemi (Pectobacterium chrysanthemi).